Reading from the N-terminus, the 843-residue chain is Excretory canal abnormal protein 6 (843 aa).

4 disordered regions span residues 54 to 135 (QLKD…EKKT), 568 to 601 (TLES…PAKT), 748 to 767 (TPLS…MTAE), and 773 to 843 (TMKP…PKWV). 2 stretches are compositionally biased toward pro residues: residues 66 to 76 (TPPPPPPPPPL) and 83 to 103 (APPP…PPPI). The region spanning 127–512 (FLPKKEKKTK…KEEKKETQTT (386 aa)) is the FH2 domain. Polar residues-rich tracts occupy residues 776 to 792 (PSVS…TSSH) and 819 to 830 (IPQSPTVTSSAR).

It belongs to the formin homology family. As to expression, expressed in the excretory cell and mostly accumulates at the tip of the excretory cell canals.

The protein localises to the cytoplasm. It is found in the cytoskeleton. Functionally, constitutively active protein required for microtubule and F-actin growth, structural maintenance and organization during excretory cell tubulogenesis. This Caenorhabditis elegans protein is Excretory canal abnormal protein 6.